Here is an 827-residue protein sequence, read N- to C-terminus: Polyhomeotic-like protein 2 (827 aa).

Disordered regions lie at residues 1 to 78, 282 to 316, and 482 to 545; these read MEKE…QYLQ, GLGA…SDLT, and QEPT…PPQA. Over residues 9 to 38 the composition is skewed to low complexity; the sequence is SVASSASVTIPSTTSVSTSTSAGTLSNSSS. The segment covering 485–498 has biased composition (basic and acidic residues); it reads TRTELRQSDKESQV. Residues 517 to 538 show a composition bias toward polar residues; the sequence is AMTSGSGNNAPTVTGSAPQNGE. The HD1 signature appears at 540 to 570; the sequence is KPPPQAVVKPQILTHVIEGFVIQEGAEPFPV. The FCS-type zinc-finger motif lies at 609 to 643; it reads NNQPEPVRTCEFCGNVDFAFNFKRSKRFCSTVCAK. The Zn(2+) site is built by C618, C621, C637, and C641. A disordered region spans residues 653–730; the sequence is MGLFPGKSSP…EPISPLSNSS (78 aa). Residues 661 to 675 are compositionally biased toward basic and acidic residues; that stretch reads SPEDTKKPKASDESP. Composition is skewed to polar residues over residues 687-696 and 708-717; these read PSIQTTTGAS and GESSQCSDMS. The 65-residue stretch at 763–827 folds into the SAM domain; sequence WNVEDVYEFI…FARISMLKDS (65 aa).

As to quaternary structure, component of a PRC1-like complex. In terms of tissue distribution, isoform 1 expression is stronger at the posterior border than in the anterior region within individual somites; On the contrary, isoform 2 expression is higher at the posterior border.

The protein localises to the nucleus. Component of a Polycomb group (PcG) multiprotein PRC1-like complex, a complex class required to maintain the transcriptionally repressive state of many genes, including Hox genes, throughout development. PcG PRC1 complex acts via chromatin remodeling and modification of histones; it mediates monoubiquitination of histone H2A 'Lys-119', rendering chromatin heritably changed in its expressibility. This Danio rerio (Zebrafish) protein is Polyhomeotic-like protein 2 (phc2).